The following is a 143-amino-acid chain: MRVLVQRVSSAAVTVEGAVVGAIRPDAQGLLAFVGVTHSDDRDKARRLAEKLWKLRILADERSASDVGAPILVVSQFTLYADTAKGRRPSWNAAAPAAVAEPLVTEFAAALQGLGADVQTGVFGANMQVELVNDGPVTVLLEL.

Positions 135–136 match the Gly-cisPro motif, important for rejection of L-amino acids motif; that stretch reads GP.

Belongs to the DTD family. As to quaternary structure, homodimer.

It localises to the cytoplasm. It carries out the reaction glycyl-tRNA(Ala) + H2O = tRNA(Ala) + glycine + H(+). The enzyme catalyses a D-aminoacyl-tRNA + H2O = a tRNA + a D-alpha-amino acid + H(+). Functionally, an aminoacyl-tRNA editing enzyme that deacylates mischarged D-aminoacyl-tRNAs. Also deacylates mischarged glycyl-tRNA(Ala), protecting cells against glycine mischarging by AlaRS. Acts via tRNA-based rather than protein-based catalysis; rejects L-amino acids rather than detecting D-amino acids in the active site. By recycling D-aminoacyl-tRNA to D-amino acids and free tRNA molecules, this enzyme counteracts the toxicity associated with the formation of D-aminoacyl-tRNA entities in vivo and helps enforce protein L-homochirality. The polypeptide is D-aminoacyl-tRNA deacylase (Mycobacterium avium (strain 104)).